The following is a 376-amino-acid chain: MAKRDYYEVLGVAKNASDDEIKKAYRKLAMKYHPDRNPDNKDAEEHFKEVKEAYEMLSDSQKRAAYDQYGHAGVDPNMGGAGAQGFGGFADAFGDIFGDIFGQAAGGRGGRGGPQVYRGADLRYSMEITLEQAAHGYDTQIRVPSWVSCEVCHGSGAKPGTKPETCPTCHGQGTVRMSQGFFSIQQTCPKCHGTGTYIPEPCAHCHGSGKVKETKTLEVKIPAGIDDGMRIRSAGNGEPGINGGPPGDLYVEIHIKPHAVFERDGDDLHCQMPIPFTTAALGGEIEVPTLAGRATFPVPEGTQSGKTFRLRGKGIKGLRSSIAGDLYVHVQVETPVKLTEHQRDLLKQFEKSLAEGGARHSPQSKSWFDRVKSFFE.

In terms of domain architecture, J spans 5–70 (DYYEVLGVAK…QKRAAYDQYG (66 aa)). A CR-type zinc finger spans residues 136-214 (GYDTQIRVPS…CHGSGKVKET (79 aa)). Residues C149, C152, C166, C169, C188, C191, C202, and C205 each coordinate Zn(2+). CXXCXGXG motif repeat units follow at residues 149 to 156 (CEVCHGSG), 166 to 173 (CPTCHGQG), 188 to 195 (CPKCHGTG), and 202 to 209 (CAHCHGSG).

This sequence belongs to the DnaJ family. Homodimer. It depends on Zn(2+) as a cofactor.

It localises to the cytoplasm. Its function is as follows. Participates actively in the response to hyperosmotic and heat shock by preventing the aggregation of stress-denatured proteins and by disaggregating proteins, also in an autonomous, DnaK-independent fashion. Unfolded proteins bind initially to DnaJ; upon interaction with the DnaJ-bound protein, DnaK hydrolyzes its bound ATP, resulting in the formation of a stable complex. GrpE releases ADP from DnaK; ATP binding to DnaK triggers the release of the substrate protein, thus completing the reaction cycle. Several rounds of ATP-dependent interactions between DnaJ, DnaK and GrpE are required for fully efficient folding. Also involved, together with DnaK and GrpE, in the DNA replication of plasmids through activation of initiation proteins. In Burkholderia multivorans (strain ATCC 17616 / 249), this protein is Chaperone protein DnaJ.